The following is a 392-amino-acid chain: Succinate--CoA ligase [ADP-forming] subunit beta (392 aa).

The ATP-grasp domain maps to 9–236; that stretch reads RDLFERHGLP…QAAVDPLEQA (228 aa). Residues lysine 45, 52 to 54, alanine 94, and glutamate 99 contribute to the ATP site; that span reads GRG. Mg(2+)-binding residues include asparagine 191 and aspartate 205. Residues asparagine 256 and 318-320 contribute to the substrate site; that span reads GIT.

Belongs to the succinate/malate CoA ligase beta subunit family. In terms of assembly, heterotetramer of two alpha and two beta subunits. Mg(2+) is required as a cofactor.

It catalyses the reaction succinate + ATP + CoA = succinyl-CoA + ADP + phosphate. It carries out the reaction GTP + succinate + CoA = succinyl-CoA + GDP + phosphate. It functions in the pathway carbohydrate metabolism; tricarboxylic acid cycle; succinate from succinyl-CoA (ligase route): step 1/1. Succinyl-CoA synthetase functions in the citric acid cycle (TCA), coupling the hydrolysis of succinyl-CoA to the synthesis of either ATP or GTP and thus represents the only step of substrate-level phosphorylation in the TCA. The beta subunit provides nucleotide specificity of the enzyme and binds the substrate succinate, while the binding sites for coenzyme A and phosphate are found in the alpha subunit. This is Succinate--CoA ligase [ADP-forming] subunit beta from Salinispora arenicola (strain CNS-205).